A 169-amino-acid polypeptide reads, in one-letter code: Probable NADH dehydrogenase [ubiquinone] 1 alpha subcomplex subunit 5, mitochondrial (169 aa).

The transit peptide at M1 to L11 directs the protein to the mitochondrion.

It belongs to the complex I NDUFA5 subunit family. In terms of assembly, complex I is composed of at least 49 different subunits.

Its subcellular location is the mitochondrion inner membrane. Its function is as follows. Accessory subunit of the mitochondrial membrane respiratory chain NADH dehydrogenase (Complex I), that is believed not to be involved in catalysis. Complex I functions in the transfer of electrons from NADH to the respiratory chain. The immediate electron acceptor for the enzyme is believed to be ubiquinone. This is Probable NADH dehydrogenase [ubiquinone] 1 alpha subcomplex subunit 5, mitochondrial from Arabidopsis thaliana (Mouse-ear cress).